The sequence spans 195 residues: FMN-dependent NADH:quinone oxidoreductase (195 aa).

FMN-binding positions include Ser10, 16 to 18 (SVS), and 88 to 91 (MYNF).

It belongs to the azoreductase type 1 family. As to quaternary structure, homodimer. It depends on FMN as a cofactor.

The catalysed reaction is 2 a quinone + NADH + H(+) = 2 a 1,4-benzosemiquinone + NAD(+). The enzyme catalyses N,N-dimethyl-1,4-phenylenediamine + anthranilate + 2 NAD(+) = 2-(4-dimethylaminophenyl)diazenylbenzoate + 2 NADH + 2 H(+). Quinone reductase that provides resistance to thiol-specific stress caused by electrophilic quinones. Its function is as follows. Also exhibits azoreductase activity. Catalyzes the reductive cleavage of the azo bond in aromatic azo compounds to the corresponding amines. This chain is FMN-dependent NADH:quinone oxidoreductase, found in Francisella philomiragia subsp. philomiragia (strain ATCC 25017 / CCUG 19701 / FSC 153 / O#319-036).